A 243-amino-acid chain; its full sequence is Carboxy-S-adenosyl-L-methionine synthase (243 aa).

Residues Tyr39, Gly64–Ser66, Asp90–Asn91, Asp118–Leu119, Asn133, and Arg200 each bind S-adenosyl-L-methionine.

It belongs to the class I-like SAM-binding methyltransferase superfamily. Cx-SAM synthase family. In terms of assembly, homodimer.

It catalyses the reaction prephenate + S-adenosyl-L-methionine = carboxy-S-adenosyl-L-methionine + 3-phenylpyruvate + H2O. Catalyzes the conversion of S-adenosyl-L-methionine (SAM) to carboxy-S-adenosyl-L-methionine (Cx-SAM). The chain is Carboxy-S-adenosyl-L-methionine synthase from Idiomarina loihiensis (strain ATCC BAA-735 / DSM 15497 / L2-TR).